The following is a 240-amino-acid chain: Sugar fermentation stimulation protein homolog (240 aa).

This sequence belongs to the SfsA family.

This Pasteurella multocida (strain Pm70) protein is Sugar fermentation stimulation protein homolog.